A 137-amino-acid chain; its full sequence is Basic phospholipase A2 beta-bungarotoxin A5 chain (137 aa).

Residues 1-9 (AVCVSLLGA) form the signal peptide. A propeptide spanning residues 10-17 (ANIPPQHL) is cleaved from the precursor. 6 cysteine pairs are disulfide-bonded: Cys-44–Cys-136, Cys-46–Cys-62, Cys-61–Cys-117, Cys-68–Cys-110, Cys-78–Cys-103, and Cys-96–Cys-108. Residues Tyr-45, Gly-47, and Gly-49 each coordinate Ca(2+). His-65 is an active-site residue. Position 66 (Asp-66) interacts with Ca(2+). Residue Asp-111 is part of the active site.

It belongs to the phospholipase A2 family. Group I subfamily. D49 sub-subfamily. In terms of assembly, heterodimer; disulfide-linked. The A chains have phospholipase A2 activity and the B chains show homology with the basic protease inhibitors. The cofactor is Ca(2+). Expressed by the venom gland.

It is found in the secreted. The catalysed reaction is a 1,2-diacyl-sn-glycero-3-phosphocholine + H2O = a 1-acyl-sn-glycero-3-phosphocholine + a fatty acid + H(+). Its function is as follows. Snake venom phospholipase A2 (PLA2) that inhibits neuromuscular transmission by blocking acetylcholine release from the nerve termini. PLA2 catalyzes the calcium-dependent hydrolysis of the 2-acyl groups in 3-sn-phosphoglycerides. In Bungarus multicinctus (Many-banded krait), this protein is Basic phospholipase A2 beta-bungarotoxin A5 chain.